The sequence spans 309 residues: Serine/threonine-protein phosphatase 2A catalytic subunit beta isoform (309 aa).

Mn(2+) is bound by residues D57, H59, D85, and N117. The active-site Proton donor is H118. Mn(2+) contacts are provided by H167 and H241. Y307 is modified (phosphotyrosine). L309 carries the post-translational modification Leucine methyl ester.

Belongs to the PPP phosphatase family. PP-1 subfamily. As to quaternary structure, PP2A consists of a common heterodimeric core enzyme (composed of a 36 kDa catalytic subunit (subunit C) and a 65 kDa constant regulatory subunit (PR65) (subunit A)) that associates with a variety of regulatory subunits. Proteins that associate with the core dimer include three families of regulatory subunits B (the R2/B/PR55/B55, R3/B''/PR72/PR130/PR59 and R5/B'/B56 families), the 48 kDa variable regulatory subunit, viral proteins, and cell signaling molecules. Binds PPME1. May indirectly interact with SGO1, most probably through regulatory B56 subunits. Interacts with CTTNBP2NL. Interacts with PTPA. Found in a complex with at least ARL2, PPP2CB, PPP2R1A, PPP2R2A, PPP2R5E and TBCD. Interacts with TBCD. Part of the core of STRIPAK complexes composed of PP2A catalytic and scaffolding subunits, the striatins (PP2A regulatory subunits), the striatin-associated proteins MOB4, STRIP1 and STRIP2, PDCD10 and members of the STE20 kinases, such as STK24 and STK26. Requires Mn(2+) as cofactor. Reversibly methyl esterified on Leu-309 by leucine carboxyl methyltransferase 1 (Lcmt1) and protein phosphatase methylesterase 1 (Ppme1). Carboxyl methylation influences the affinity of the catalytic subunit for the different regulatory subunits, thereby modulating the PP2A holoenzyme's substrate specificity, enzyme activity and cellular localization. In terms of processing, phosphorylation of either threonine (by autophosphorylation-activated protein kinase) or tyrosine results in inactivation of the phosphatase. Auto-dephosphorylation has been suggested as a mechanism for reactivation. Post-translationally, may be monoubiquitinated by NOSIP.

The protein localises to the cytoplasm. Its subcellular location is the nucleus. It is found in the chromosome. The protein resides in the centromere. It localises to the cytoskeleton. The protein localises to the spindle pole. It carries out the reaction O-phospho-L-seryl-[protein] + H2O = L-seryl-[protein] + phosphate. The enzyme catalyses O-phospho-L-threonyl-[protein] + H2O = L-threonyl-[protein] + phosphate. Its function is as follows. Catalytic subunit of protein phosphatase 2A (PP2A), a serine/threonine phosphatase involved in the regulation of a wide variety of enzymes, signal transduction pathways, and cellular events. PP2A can modulate the activity of phosphorylase B kinase, casein kinase 2, mitogen-stimulated S6 kinase, and MAP-2 kinase. Part of the striatin-interacting phosphatase and kinase (STRIPAK) complexes. STRIPAK complexes have critical roles in protein (de)phosphorylation and are regulators of multiple signaling pathways including Hippo, MAPK, nuclear receptor and cytoskeleton remodeling. Different types of STRIPAK complexes are involved in a variety of biological processes such as cell growth, differentiation, apoptosis, metabolism and immune regulation. In Mus musculus (Mouse), this protein is Serine/threonine-protein phosphatase 2A catalytic subunit beta isoform (Ppp2cb).